A 162-amino-acid chain; its full sequence is UPF0260 protein Caul_3920 (162 aa).

Belongs to the UPF0260 family.

This Caulobacter sp. (strain K31) protein is UPF0260 protein Caul_3920.